Here is a 185-residue protein sequence, read N- to C-terminus: Cuticle protein 18.6, isoform B (185 aa).

Repeat copies occupy residues 21–24 (AAPA), 33–36 (AAPV), 41–44 (AAPV), 133–136 (AAPV), 139–142 (AAPV), and 150–153 (AAPV). The Chitin-binding type R&amp;R domain occupies 64-134 (HPQYSFAYNV…KEAGAHPAAA (71 aa)).

In terms of biological role, component of the cuticle of migratory locust which contains more than 100 different structural proteins. This chain is Cuticle protein 18.6, isoform B, found in Locusta migratoria (Migratory locust).